The chain runs to 307 residues: Cyclin-dependent kinase 5 activator 1 (307 aa).

Serine 8 is subject to Phosphoserine; by CDK5. Residues 96–136 (STFAQPPPAQPPAPPANQLSGSQTGVSSSVKKAPHPSVTSA) form a disordered region. Residues 100–110 (QPPPAQPPAPP) are compositionally biased toward pro residues. Polar residues predominate over residues 112 to 125 (NQLSGSQTGVSSSV). Position 138 is a phosphothreonine; by CDK5 (threonine 138).

The protein belongs to the cyclin-dependent kinase 5 activator family. As to quaternary structure, heterodimer composed of a catalytic subunit CDK5 and a regulatory subunit CDK5R1 (p25) and macromolecular complex composed of at least CDK5, CDK5R1 (p35) and CDK5RAP1 or CDK5RAP2 or CDK5RAP3. Only the heterodimer shows kinase activity. Interacts with EPHA4 and NGEF; may mediate the activation of NGEF by EPHA4. Interacts with RASGRF2. The complex p35/CDK5 interacts with CLOCK. The p35 form is proteolytically cleaved by calpain, giving rise to the p25 form. P35 has a 5 to 10 fold shorter half-life compared to p25. The conversion results in deregulation of the CDK5 kinase: p25/CDK5 kinase displays an increased and altered tau phosphorylation in comparison to the p35/CDK5 kinase in vivo. In terms of processing, myristoylated. A proper myristoylation signal is essential for the proper distribution of p35. Post-translationally, phosphorylation at Ser-8 and Thr-138 by CDK5 prevents calpain-mediated proteolysis. Ubiquitinated, leading to its degradation: degradation of p35 by proteasome results in down-regulation of CDK5 activity. During this process, CDK5 phosphorylates p35 and induces its ubiquitination and subsequent degradation. Ubiquitinated by the CRL2(FEM1B) complex, which recognizes the -Gly-Leu-Asp-Arg C-degron at the C-terminus, leading to its degradation. As to expression, brain and neuron specific.

Its subcellular location is the cell membrane. The protein resides in the cell projection. The protein localises to the neuron projection. It is found in the nucleus. It localises to the cytoplasm. Its subcellular location is the perinuclear region. The protein resides in the perikaryon. P35 is a neuron specific activator of CDK5. The complex p35/CDK5 is required for neurite outgrowth and cortical lamination. Involved in dendritic spine morphogenesis by mediating the EFNA1-EPHA4 signaling. Activator of TPKII. The complex p35/CDK5 participates in the regulation of the circadian clock by modulating the function of CLOCK protein: phosphorylates CLOCK at 'Thr-451' and 'Thr-461' and regulates the transcriptional activity of the CLOCK-BMAL1 heterodimer in association with altered stability and subcellular distribution. This Spermophilus citellus (European ground squirrel) protein is Cyclin-dependent kinase 5 activator 1 (CDK5R1).